The primary structure comprises 109 residues: Nucleoid-associated protein Bcer98_0019 (109 aa).

The protein belongs to the YbaB/EbfC family. Homodimer.

It localises to the cytoplasm. The protein resides in the nucleoid. Its function is as follows. Binds to DNA and alters its conformation. May be involved in regulation of gene expression, nucleoid organization and DNA protection. The chain is Nucleoid-associated protein Bcer98_0019 from Bacillus cytotoxicus (strain DSM 22905 / CIP 110041 / 391-98 / NVH 391-98).